The primary structure comprises 85 residues: Defensin-like protein 76 (85 aa).

An N-terminal signal peptide occupies residues 1–27; that stretch reads MQNQKHSHILTAITIVLLFAMAAKINA. 4 disulfides stabilise this stretch: Cys35/Cys70, Cys40/Cys59, Cys44/Cys68, and Cys48/Cys69.

It belongs to the DEFL family.

The protein resides in the secreted. The polypeptide is Defensin-like protein 76 (LCR86) (Arabidopsis thaliana (Mouse-ear cress)).